We begin with the raw amino-acid sequence, 130 residues long: Small ribosomal subunit protein uS11 (130 aa).

The protein belongs to the universal ribosomal protein uS11 family. As to quaternary structure, part of the 30S ribosomal subunit. Interacts with proteins S7 and S18. Binds to IF-3.

Functionally, located on the platform of the 30S subunit, it bridges several disparate RNA helices of the 16S rRNA. Forms part of the Shine-Dalgarno cleft in the 70S ribosome. This chain is Small ribosomal subunit protein uS11, found in Thermosynechococcus vestitus (strain NIES-2133 / IAM M-273 / BP-1).